A 154-amino-acid chain; its full sequence is MYRMQLLSCIALSLALITNSAPTSSSTKKTQLQLEHLLLDLQMLLNGINNYKNPKLTRMLTFKFYMPKKATELKHLQCLEEELKPLEEVLNLAQSKNFHLRDTRDIISNINVLVLELKGSETTFTCEYDDDTATIIEFLNGWITFCQSIISTLT.

An N-terminal signal peptide occupies residues 1–20; sequence MYRMQLLSCIALSLALITNS. Thr-23 carries an O-linked (GalNAc...) threonine glycan. A disulfide bond links Cys-78 and Cys-126.

This sequence belongs to the IL-2 family.

The protein localises to the secreted. Functionally, cytokine produced by activated CD4-positive helper T-cells and to a lesser extend activated CD8-positive T-cells and natural killer (NK) cells that plays pivotal roles in the immune response and tolerance. Binds to a receptor complex composed of either the high-affinity trimeric IL-2R (IL2RA/CD25, IL2RB/CD122 and IL2RG/CD132) or the low-affinity dimeric IL-2R (IL2RB and IL2RG). Interaction with the receptor leads to oligomerization and conformation changes in the IL-2R subunits resulting in downstream signaling starting with phosphorylation of JAK1 and JAK3. In turn, JAK1 and JAK3 phosphorylate the receptor to form a docking site leading to the phosphorylation of several substrates including STAT5. This process leads to activation of several pathways including STAT, phosphoinositide-3-kinase/PI3K and mitogen-activated protein kinase/MAPK pathways. Functions as a T-cell growth factor and can increase NK-cell cytolytic activity as well. Promotes strong proliferation of activated B-cells and subsequently immunoglobulin production. Plays a pivotal role in regulating the adaptive immune system by controlling the survival and proliferation of regulatory T-cells, which are required for the maintenance of immune tolerance. Moreover, participates in the differentiation and homeostasis of effector T-cell subsets, including Th1, Th2, Th17 as well as memory CD8-positive T-cells. The sequence is that of Interleukin-2 (IL2) from Papio hamadryas (Hamadryas baboon).